The primary structure comprises 201 residues: Recombination protein RecR (201 aa).

A C4-type zinc finger spans residues 60-75 (CKYCQSLTEKDVCDIC). A Toprim domain is found at 83–177 (SKLCIIESML…KISRIGFGVP (95 aa)).

It belongs to the RecR family.

In terms of biological role, may play a role in DNA repair. It seems to be involved in an RecBC-independent recombinational process of DNA repair. It may act with RecF and RecO. This chain is Recombination protein RecR, found in Francisella philomiragia subsp. philomiragia (strain ATCC 25017 / CCUG 19701 / FSC 153 / O#319-036).